The primary structure comprises 1056 residues: Multidrug resistance protein MdtB (1056 aa).

A run of 12 helical transmembrane segments spans residues 16–36, 342–362, 373–393, 396–416, 440–460, 472–492, 537–557, 869–889, 890–910, 911–931, 968–988, and 1002–1022; these read FILR…AGII, DVQF…YVFL, IAVP…GFSV, LTLM…IVVI, IGFT…PLLF, FAIT…TLTP, WITL…YLTI, LILA…ESFI, HPVT…LALM, VGGY…IGIV, ILMT…STGI, and GGLI…YLLF. The segment at 1037-1056 is disordered; that stretch reads LQSQNQRELDHSPVNHQEPL. Basic and acidic residues predominate over residues 1043 to 1056; the sequence is RELDHSPVNHQEPL.

It belongs to the resistance-nodulation-cell division (RND) (TC 2.A.6) family. MdtB subfamily. In terms of assembly, part of a tripartite efflux system composed of MdtA, MdtB and MdtC. MdtB forms a heteromultimer with MdtC.

It is found in the cell inner membrane. The chain is Multidrug resistance protein MdtB from Xenorhabdus bovienii (strain SS-2004) (Xenorhabdus nematophila subsp. bovienii).